The chain runs to 395 residues: Tubulin-like protein CetZ1 (395 aa).

Residues 10-14, 110-112, glutamate 142, asparagine 169, and asparagine 187 each bind GTP; these read QAGGK and GTG.

The protein belongs to the CetZ family.

The protein localises to the cytoplasm. Its function is as follows. Involved in cell shape control. Essential for the development of a rod-shaped cell type required for efficient swimming. The polypeptide is Tubulin-like protein CetZ1 (Haloferax volcanii (strain ATCC 29605 / DSM 3757 / JCM 8879 / NBRC 14742 / NCIMB 2012 / VKM B-1768 / DS2) (Halobacterium volcanii)).